The chain runs to 415 residues: MTDQAEKKHSAFWGVMVIAGTVIGGGMFALPVDLAGAWFFWGAFILIIAWFSMLHSGLLLLEANLNYPVGSSFNTITKDLIGNTWNIISGITVAFVLYILTYAYISANGAIISETISMNLGYHANPRIVGICTAIFVASVLWLSSLAASRITSLFLGLKIISFVIVFGSFFFQVDYSILRDATSSTAGTSYFPYIFMALPVCLASFGFHGNIPSLIICYGKRKDKLIKSVVFGSLLALVIYLFWLYCTMGNIPRESFKAIISSGGNVDSLVKSFLGTKQHGIIEFCLLVFSNLAVASSFFGVTLGLFDYLADLFKIDNSHGGRFKTVLLTFLPPALLYLIFPNGFIYGIGGAGLCATIWAVIIPAVLAIKARKKFPNQMFTVWGGNLIPAIVILFGITVILCWFGNVFNVLPKFG.

The Cytoplasmic segment spans residues 1–11 (MTDQAEKKHSA). A helical transmembrane segment spans residues 12–32 (FWGVMVIAGTVIGGGMFALPV). A topological domain (periplasmic) is located at residue Asp33. A helical membrane pass occupies residues 34–54 (LAGAWFFWGAFILIIAWFSML). The Cytoplasmic segment spans residues 55–86 (HSGLLLLEANLNYPVGSSFNTITKDLIGNTWN). Residues 87 to 107 (IISGITVAFVLYILTYAYISA) form a helical membrane-spanning segment. At 108-127 (NGAIISETISMNLGYHANPR) the chain is on the periplasmic side. The helical transmembrane segment at 128 to 148 (IVGICTAIFVASVLWLSSLAA) threads the bilayer. Residues 149 to 153 (SRITS) lie on the Cytoplasmic side of the membrane. Residues 154-174 (LFLGLKIISFVIVFGSFFFQV) form a helical membrane-spanning segment. Residues 175–191 (DYSILRDATSSTAGTSY) are Periplasmic-facing. Residues 192-212 (FPYIFMALPVCLASFGFHGNI) traverse the membrane as a helical segment. Residues 213–229 (PSLIICYGKRKDKLIKS) are Cytoplasmic-facing. A helical transmembrane segment spans residues 230 to 250 (VVFGSLLALVIYLFWLYCTMG). Residues 251–286 (NIPRESFKAIISSGGNVDSLVKSFLGTKQHGIIEFC) lie on the Periplasmic side of the membrane. A helical transmembrane segment spans residues 287–307 (LLVFSNLAVASSFFGVTLGLF). Residues 308–326 (DYLADLFKIDNSHGGRFKT) are Cytoplasmic-facing. Residues 327-347 (VLLTFLPPALLYLIFPNGFIY) form a helical membrane-spanning segment. Gly348 is a topological domain (periplasmic). The chain crosses the membrane as a helical span at residues 349–369 (IGGAGLCATIWAVIIPAVLAI). Residues 370–387 (KARKKFPNQMFTVWGGNL) are Cytoplasmic-facing. The helical transmembrane segment at 388–408 (IPAIVILFGITVILCWFGNVF) threads the bilayer. At 409-415 (NVLPKFG) the chain is on the periplasmic side.

It belongs to the amino acid/polyamine transporter 2 family. Mtr/TnaB/TyrP permease subfamily.

The protein resides in the cell inner membrane. Functionally, involved in tryptophan transport across the cytoplasmic membrane. Plays a role in transporting tryptophan which is to be used catabolically. This is Low affinity tryptophan permease (tnaB) from Escherichia coli (strain K12).